Reading from the N-terminus, the 289-residue chain is SAGA-associated factor 29kDa (289 aa).

Positions 9–36 form a coiled coil; that stretch reads AQQIQDRLKDIQQNIHNVDEERRRAENS. Residues 137–278 form the SGF29 C-terminal domain; sequence GNYVAKVGDN…VIAYRPTKKG (142 aa). Histone H3K4me3 N-terminus binding regions lie at residues 179-181 and 225-228; these read DID and QTTC. The histone H3K4me3 binding stretch occupies residues 249–251; sequence FED.

The protein belongs to the SGF29 family. As to quaternary structure, component of the Spt-Ada-Gcn5 acetyltransferase (SAGA) complex consisting of wda/Taf5L, Saf6, Taf9, Taf10b, Taf12, Ada1, Spt3, Spt7, Spt20, Sf3b3, Sf3b5, Nipped-A/Tra1, a histone acetyltransferase (HAT) module made up of Gcn5, Ada2b (Isoform B), Ada3 and Sgf29, and a deubiquitinase (DUB) module made up of not/nonstop, Sgf11, Atxn7 and e(y)2. Component of the Chiffon histone acetyltransferase (CHAT) complex consisting of Ada3, Sgf29, Gcn5, chif/chiffon and Ada2b (Isoform A).

It is found in the nucleus. Its function is as follows. Component of both the SAGA and CHAT histone acetyltransferase complexes, which both predominantly acetylate histone H3. The sequence is that of SAGA-associated factor 29kDa from Drosophila melanogaster (Fruit fly).